The primary structure comprises 756 residues: Xylosyl- and glucuronyltransferase LARGE1 (756 aa).

Over 1–10 (MLGICRGRRK) the chain is Cytoplasmic. Residues 11–31 (FLAASLTVLFVPAVTWIYLFA) traverse the membrane as a helical; Signal-anchor for type II membrane protein segment. Residues 32-756 (GSFEDGKPVS…LKYLTAENNS (725 aa)) are Lumenal-facing. 2 disordered regions span residues 42–63 (LSPL…RDRE) and 81–109 (KQLS…EGTG). The span at 44-58 (PLESQPHSPRYTASS) shows a compositional bias: polar residues. Residues 55-90 (TASSQRDRESLEVRMREVEEENRVLRKQLSLAQGRS) adopt a coiled-coil conformation. Residues N97, N122, and N148 are each glycosylated (N-linked (GlcNAc...) asparagine). The tract at residues 138 to 413 (IHVAIVCAGY…FLEYDGNLLR (276 aa)) is xylosyltransferase activity. D242 and D244 together coordinate Mn(2+). N-linked (GlcNAc...) asparagine glycosylation occurs at N272. The segment at 414-756 (RELFGCPSEA…LKYLTAENNS (343 aa)) is glucuronyltransferase activity. D563 and D565 together coordinate Mn(2+).

This sequence in the C-terminal section; belongs to the glycosyltransferase 49 family. The protein in the N-terminal section; belongs to the glycosyltransferase 8 family. Requires Mn(2+) as cofactor.

It is found in the golgi apparatus membrane. The enzyme catalyses 3-O-[beta-D-GlcA-(1-&gt;3)-beta-D-Xyl-(1-&gt;4)-Rib-ol-P-Rib-ol-P-3-beta-D-GalNAc-(1-&gt;3)-beta-D-GlcNAc-(1-&gt;4)-(O-6-P-alpha-D-Man)]-Thr-[protein] + UDP-alpha-D-xylose = 3-O-[alpha-D-Xyl-(1-&gt;3)-beta-D-GlcA-(1-&gt;4)-beta-D-Xyl-(1-&gt;4)-Rib-ol-P-Rib-ol-P-3-beta-D-GalNAc-(1-&gt;3)-beta-D-GlcNAc-(1-&gt;4)-(O-6-P-alpha-D-Man)]-Thr-[protein] + UDP + H(+). It catalyses the reaction 3-O-{(1-&gt;[3)-alpha-D-Xyl-(1-&gt;3)-beta-D-GlcA-(1-&gt;](n)-4)-beta-D-Xyl-(1-&gt;4)-Rib-ol-P-Rib-ol-P-3-beta-D-GalNAc-(1-&gt;3)-beta-D-GlcNAc-(1-&gt;4)-O-6-P-alpha-D-Man}-L-Thr-[protein] + UDP-alpha-D-glucuronate = 3-O-{beta-D-GlcA-(1-&gt;[3)-alpha-D-Xyl-(1-&gt;3)-beta-D-GlcA-(1-&gt;](n)-4)-beta-D-Xyl-(1-&gt;4)-Rib-ol-P-Rib-ol-P-3-beta-D-GalNAc-(1-&gt;3)-beta-D-GlcNAc-(1-&gt;4)-O-6-P-alpha-D-Man}-L-Thr-[protein] + UDP + H(+). It carries out the reaction 3-O-{beta-D-GlcA-(1-&gt;[3)-alpha-D-Xyl-(1-&gt;3)-beta-D-GlcA-(1-&gt;](n)-4)-beta-D-Xyl-(1-&gt;4)-Rib-ol-P-Rib-ol-P-3-beta-D-GalNAc-(1-&gt;3)-beta-D-GlcNAc-(1-&gt;4)-O-6-P-alpha-D-Man}-L-Thr-[protein] + UDP-alpha-D-xylose = 3-O-{(1-&gt;[3)-alpha-D-Xyl-(1-&gt;3)-beta-D-GlcA-(1-&gt;](n+1)-4)-beta-D-Xyl-(1-&gt;4)-Rib-ol-P-Rib-ol-P-3-beta-D-GalNAc-(1-&gt;3)-beta-D-GlcNAc-(1-&gt;4)-O-6-P-alpha-D-Man}-L-Thr-[protein] + UDP + H(+). Its pathway is protein modification; protein glycosylation. Its function is as follows. Bifunctional glycosyltransferase with both alpha-1,3-xylosyltransferase and beta-1,3-glucuronyltransferase activities involved in the maturation of alpha-dystroglycan (DAG1) by glycosylation leading to DAG1 binding to laminin G-like domain-containing extracellular proteins with high affinity. Elongates the glucuronyl-beta-1,4-xylose-beta disaccharide primer structure initiated by B4GAT1 by adding repeating units [-3-Xylose-alpha-1,3-GlcA-beta-1-] to produce a heteropolysaccharide. Requires the phosphorylation of core M3 (O-mannosyl trisaccharide) by POMK to elongate the glucuronyl-beta-1,4-xylose-beta disaccharide primer. Plays a key role in skeletal muscle function and regeneration. The polypeptide is Xylosyl- and glucuronyltransferase LARGE1 (Gallus gallus (Chicken)).